The sequence spans 181 residues: Sporozoite-associated mosquito saliva protein 1 (181 aa).

The first 24 residues, 1–24 (MNSSWRVVVFLGLVILCHSRRARA), serve as a signal peptide directing secretion.

In terms of tissue distribution, salivary gland (at protein level). As to expression, (Microbial infection) Detected with Plasmodium berghei sporozoites isolated from the saliva of infected Anopheles gambiae mosquitoes (at protein level).

It localises to the secreted. Its function is as follows. Decreases host neutrophil chemotaxis induced by N-formylmethionine-leucyl-phenylalanine (fMLP). In terms of biological role, (Microbial infection) Interacts with the surface of Plasmodium berghei sporozoites. Enhances sporozoite gliding activity. Enhances host hepatocyte traversal by sporozoites. The chain is Sporozoite-associated mosquito saliva protein 1 from Anopheles gambiae (African malaria mosquito).